Here is a 394-residue protein sequence, read N- to C-terminus: Enoyl-CoA delta isomerase 2 (394 aa).

A mitochondrion-targeting transit peptide spans 1-38; that stretch reads MAMAYLAWRLARRSCPSSLQVTSFPVVQLHMNRTAMRA. The 86-residue stretch at 39–124 folds into the ACB domain; sequence SQKDFENSMN…VSSLSPSLES (86 aa). At lysine 51 the chain carries N6-acetyllysine; alternate. Lysine 51 is subject to N6-succinyllysine; alternate. Lysine 55 is modified (N6-succinyllysine). Lysine 62 carries the post-translational modification N6-acetyllysine; alternate. Lysine 62 is modified (N6-succinyllysine; alternate). Residue 66 to 70 participates in an acyl-CoA binding; the sequence is YALYK. 3 positions are modified to N6-succinyllysine: lysine 70, lysine 81, and lysine 90. Residue lysine 92 is modified to N6-acetyllysine; alternate. The residue at position 92 (lysine 92) is an N6-succinyllysine; alternate. Residue lysine 92 participates in an acyl-CoA binding. Serine 101 carries the post-translational modification Phosphoserine. Tyrosine 111 contributes to the an acyl-CoA binding site. Position 119 is a phosphoserine (serine 119). The tract at residues 151 to 322 is ECH-like; sequence TKIMFNRPKK…AQGLVTEVFP (172 aa). Lysine 161 is modified (N6-succinyllysine). 198–202 contacts substrate; the sequence is SGNDL. Lysine 289 bears the N6-succinyllysine mark. The Microbody targeting signal motif lies at 392 to 394; sequence SKL.

The protein in the C-terminal section; belongs to the enoyl-CoA hydratase/isomerase family. As to expression, abundant in heart, skeletal muscle and liver. Expressed in CD34(+) T-cells and CD34(+) bone marrow cells.

It localises to the mitochondrion. It is found in the peroxisome matrix. The catalysed reaction is a (3Z)-enoyl-CoA = a 4-saturated (2E)-enoyl-CoA. It carries out the reaction (3Z)-octenoyl-CoA = (2E)-octenoyl-CoA. It catalyses the reaction a (3E)-enoyl-CoA = a 4-saturated (2E)-enoyl-CoA. The enzyme catalyses (2E)-tetradecenoyl-CoA = (3Z)-tetradecenoyl-CoA. The catalysed reaction is (3E)-tetradecenoyl-CoA = (2E)-tetradecenoyl-CoA. It carries out the reaction (3E)-octenoyl-CoA = (2E)-octenoyl-CoA. It catalyses the reaction (3E)-nonenoyl-CoA = (2E)-nonenoyl-CoA. The protein operates within lipid metabolism; fatty acid beta-oxidation. Able to isomerize both 3-cis and 3-trans double bonds into the 2-trans form in a range of enoyl-CoA species. Has a preference for 3-trans substrates. The sequence is that of Enoyl-CoA delta isomerase 2 (ECI2) from Homo sapiens (Human).